The sequence spans 112 residues: Reprimo-like protein (112 aa).

A helical membrane pass occupies residues 59–79 (VVQIAVLCVLSLTVLFGIFFL).

Belongs to the reprimo family.

It is found in the membrane. The polypeptide is Reprimo-like protein (rprml) (Xenopus laevis (African clawed frog)).